The following is a 139-amino-acid chain: Acidic phospholipase A2 Tgc-E6 (139 aa).

A signal peptide spans 1–16; it reads MRTLWIMAVLLLGVEG. Cystine bridges form between cysteine 42/cysteine 132, cysteine 44/cysteine 60, cysteine 59/cysteine 111, cysteine 65/cysteine 139, cysteine 66/cysteine 104, cysteine 73/cysteine 97, and cysteine 91/cysteine 102. Positions 43, 45, and 47 each coordinate Ca(2+). Histidine 63 is a catalytic residue. Aspartate 64 serves as a coordination point for Ca(2+). Aspartate 105 is a catalytic residue.

This sequence belongs to the phospholipase A2 family. Group II subfamily. D49 sub-subfamily. In terms of assembly, monomer. It depends on Ca(2+) as a cofactor. Expressed by the venom gland.

The protein resides in the secreted. It catalyses the reaction a 1,2-diacyl-sn-glycero-3-phosphocholine + H2O = a 1-acyl-sn-glycero-3-phosphocholine + a fatty acid + H(+). Functionally, snake venom phospholipase A2 (PLA2) that inhibits the ADP-(IC(50)=272 nM) and collagen-induced (IC(50)=518 nM) human platelet aggregation in platelet rich plasma. Exhibits very high hydrolytic activities toward the synthetic lecithin, and prefers the anionic micelles (dPPC with deoxycholate) to the zwitterionic micelles (dPPC with Triton X-100). PLA2 catalyzes the calcium-dependent hydrolysis of the 2-acyl groups in 3-sn-phosphoglycerides. The chain is Acidic phospholipase A2 Tgc-E6 from Trimeresurus gracilis (Kikuchi habu).